We begin with the raw amino-acid sequence, 150 residues long: Arginine repressor (150 aa).

Belongs to the ArgR family.

The protein resides in the cytoplasm. It functions in the pathway amino-acid biosynthesis; L-arginine biosynthesis [regulation]. Regulates arginine biosynthesis genes. This Staphylococcus epidermidis (strain ATCC 35984 / DSM 28319 / BCRC 17069 / CCUG 31568 / BM 3577 / RP62A) protein is Arginine repressor.